A 959-amino-acid chain; its full sequence is DNA translocase FtsK 1 (959 aa).

A run of 3 helical transmembrane segments spans residues 1–21, 39–59, and 83–103; these read MGLG…WRYV, IWLA…LTSG, and GWTG…PMVF. At 104-959 the chain is on the cytoplasmic side; that stretch reads GHSWRQLLAR…REVIAPGGGD (856 aa). The tract at residues 122 to 427 is disordered; it reads PVQADARHDE…AAPPPPAVPA (306 aa). Positions 126–136 are enriched in basic and acidic residues; sequence DARHDEADDGL. Low complexity-rich tracts occupy residues 220–229 and 264–286; these read ATPKAATQAP and APSA…DAPA. The segment covering 287–298 has biased composition (pro residues); that stretch reads SAPPEPAEPSPP. Positions 333-379 are enriched in acidic residues; sequence PEPEPEPEAETEVTPEAEAEPEAEPEAEAEPEAEAEAEAEAEAEPEA. Low complexity predominate over residues 380-403; sequence EAPAPESVAPALQEAEAATAAEAP. The 210-residue stretch at 605–814 folds into the FtsK domain; it reads GNPVVTDLAR…FQVSSKIDSR (210 aa). Residue 625 to 630 participates in ATP binding; that stretch reads GSGKSV.

Belongs to the FtsK/SpoIIIE/SftA family. As to quaternary structure, homohexamer. Forms a ring that surrounds DNA.

The protein resides in the cell inner membrane. Its function is as follows. Essential cell division protein that coordinates cell division and chromosome segregation. The N-terminus is involved in assembly of the cell-division machinery. The C-terminus functions as a DNA motor that moves dsDNA in an ATP-dependent manner towards the dif recombination site, which is located within the replication terminus region. Translocation stops specifically at Xer-dif sites, where FtsK interacts with the Xer recombinase, allowing activation of chromosome unlinking by recombination. FtsK orienting polar sequences (KOPS) guide the direction of DNA translocation. FtsK can remove proteins from DNA as it translocates, but translocation stops specifically at XerCD-dif site, thereby preventing removal of XerC and XerD from dif. The protein is DNA translocase FtsK 1 (ftsK1) of Ralstonia nicotianae (strain ATCC BAA-1114 / GMI1000) (Ralstonia solanacearum).